A 348-amino-acid polypeptide reads, in one-letter code: Phosphoribosylformylglycinamidine cyclo-ligase (348 aa).

Belongs to the AIR synthase family.

The protein localises to the cytoplasm. The enzyme catalyses 2-formamido-N(1)-(5-O-phospho-beta-D-ribosyl)acetamidine + ATP = 5-amino-1-(5-phospho-beta-D-ribosyl)imidazole + ADP + phosphate + H(+). It participates in purine metabolism; IMP biosynthesis via de novo pathway; 5-amino-1-(5-phospho-D-ribosyl)imidazole from N(2)-formyl-N(1)-(5-phospho-D-ribosyl)glycinamide: step 2/2. This is Phosphoribosylformylglycinamidine cyclo-ligase from Cereibacter sphaeroides (strain KD131 / KCTC 12085) (Rhodobacter sphaeroides).